Consider the following 188-residue polypeptide: Elongation factor P (188 aa).

It belongs to the elongation factor P family.

The protein localises to the cytoplasm. The protein operates within protein biosynthesis; polypeptide chain elongation. Functionally, involved in peptide bond synthesis. Stimulates efficient translation and peptide-bond synthesis on native or reconstituted 70S ribosomes in vitro. Probably functions indirectly by altering the affinity of the ribosome for aminoacyl-tRNA, thus increasing their reactivity as acceptors for peptidyl transferase. This chain is Elongation factor P, found in Chlorobaculum parvum (strain DSM 263 / NCIMB 8327) (Chlorobium vibrioforme subsp. thiosulfatophilum).